Consider the following 199-residue polypeptide: Hematopoietic prostaglandin D synthase (199 aa).

A GST N-terminal domain is found at 2–79 (PNYKLTYFNM…YLTKNTDLAG (78 aa)). Residues Y8, R14, W39, 49–51 (GKI), and 63–64 (QS) each bind glutathione. The region spanning 81–199 (TEMEQCHVDA…WIKRRPQTKL (119 aa)) is the GST C-terminal domain.

It belongs to the GST superfamily. Sigma family. Homodimer. Glutathione is required as a cofactor. Expressed in a number of megakaryocytic cell lines but not in platelets. Highly expressed in adipose tissue, macrophages and placenta. Also expressed at lower levels in lung, heart, lymph nodes, appendix, bone marrow and fetal liver.

The protein localises to the cytoplasm. The enzyme catalyses prostaglandin H2 = prostaglandin D2. It carries out the reaction RX + glutathione = an S-substituted glutathione + a halide anion + H(+). The catalysed reaction is 2-glyceryl-prostaglandin H2 = 2-glyceryl-prostaglandin D2. Its activity is regulated as follows. Prostaglandin PGD2 synthesis is stimulated by calcium and magnesium ions. One calcium or magnesium ion is bound between the subunits of the homodimer. The interactions with the protein are for the most part mediated via water molecules. Magnesium increases the affinity for glutathione, while calcium has no effect on the affinity for glutathione. In terms of biological role, bifunctional enzyme which catalyzes both the conversion of PGH2 to PGD2, a prostaglandin involved in smooth muscle contraction/relaxation and a potent inhibitor of platelet aggregation, and the conjugation of glutathione with a wide range of aryl halides and organic isothiocyanates. Also exhibits low glutathione-peroxidase activity towards cumene hydroperoxide. The protein is Hematopoietic prostaglandin D synthase of Homo sapiens (Human).